Consider the following 1114-residue polypeptide: Zinc finger E-box-binding homeobox 1 (1114 aa).

Disordered regions lie at residues 1 to 105 (MADG…EVGC) and 142 to 163 (APEE…NGTP). Over residues 15–30 (PRRNNVTNYNNVIEAN) the composition is skewed to low complexity. Residues 149–160 (QGTPEASGQDEN) show a composition bias toward polar residues. 3 C2H2-type zinc fingers span residues 170 to 193 (LTCP…KYRH), 200 to 222 (FSCS…MTSH), and 240 to 262 (FKCT…LRIH). A C2H2-type 4; atypical zinc finger spans residues 268–292 (YECPNCKKRFSHSGSYSSHISSKKC). Disordered stretches follow at residues 304-326 (SGLK…PARP), 491-529 (NLKK…TNDS), 553-588 (KNPP…GQPP), and 636-716 (QISV…SRNS). Over residues 309-326 (SQCSSPSLSASPGSPARP) the composition is skewed to low complexity. Residues 504–523 (KNEKLPEDLTVKSEKDKNFE) are compositionally biased toward basic and acidic residues. Polar residues-rich tracts occupy residues 573-584 (APSETGENNLSP) and 636-681 (QISV…QNPA). Positions 581-640 (NLSPGQPPLKNLLSLLKAYYALNAQPSAEELSKIADSVNLPLDVVKKWFEKMQAGQISVQ) form a DNA-binding region, homeobox; atypical. Positions 682 to 716 (NTSKSQTSSGGSTQNGSRSSTPSPSPLNLSSSRNS) are enriched in low complexity. The CTBP-binding motif motif lies at 767–771 (PLNLT). Composition is skewed to polar residues over residues 852 to 866 (AVQE…ANGS) and 874 to 890 (SSEG…SDST). The disordered stretch occupies residues 852-898 (AVQETPPKQTQANGSQDERQDTSSEGVSNVEDQNDSDSTPPKKKMRK). 2 consecutive C2H2-type zinc fingers follow at residues 904-926 (YACD…KYEH) and 932-954 (HECG…MRLH). The C2H2-type 7; atypical zinc-finger motif lies at 960 to 981 (YQCDKCGKRFSHSGSYSQHMNH). The interval 989 to 1114 (EAEERDSTEQ…QVSEEKTNKA (126 aa)) is disordered. Over residues 1031–1047 (EEEEDSEKEEEEEEEKD) the composition is skewed to acidic residues. Residues 1048 to 1062 (VEGLQEEKECRKLQD) are compositionally biased toward basic and acidic residues. Residues 1063-1078 (VEEEEEVEEEEEEEEG) are compositionally biased toward acidic residues. The span at 1079–1089 (KTEGNKNDDVV) shows a compositional bias: basic and acidic residues.

The protein belongs to the delta-EF1/ZFH-1 C2H2-type zinc-finger family. In terms of tissue distribution, expression is developmentally regulated with high expression in mesoderm, nervous system and lens.

It localises to the nucleus. Acts as a transcriptional repressor. Positively regulates neuronal differentiation. Represses transcription by binding to the E box-containing promoter. Binds to delta 1-crystallin enhancer core and represses lens-specific transcription. It also binds many other non-lens specific DNA sequences. The protein is Zinc finger E-box-binding homeobox 1 (ZEB1) of Gallus gallus (Chicken).